A 449-amino-acid polypeptide reads, in one-letter code: Protein adenylyltransferase FICD (449 aa).

A helical membrane pass occupies residues leucine 15 to leucine 35. TPR repeat units follow at residues alanine 96–phenylalanine 129 and valine 130–histidine 163. The Inhibitory (S/T)XXXE(G/N) motif signature appears at threonine 220 to glycine 225. Residues glutamate 224, glutamate 250–glutamine 251, glycine 358–glycine 360, and arginine 364 contribute to the ATP site. A Fido domain is found at isoleucine 275–lysine 410.

Belongs to the fic family.

Its subcellular location is the membrane. The catalysed reaction is L-tyrosyl-[protein] + ATP = O-(5'-adenylyl)-L-tyrosyl-[protein] + diphosphate. The enzyme catalyses L-threonyl-[protein] + ATP = 3-O-(5'-adenylyl)-L-threonyl-[protein] + diphosphate. Its activity is regulated as follows. Adenylyltransferase activity is inhibited by the inhibitory helix present at the N-terminus: Glu-224 binds ATP and competes with ATP-binding at Arg-364, thereby preventing adenylyltransferase activity. Activation dissociates ATP-binding from Glu-224, allowing ordered binding of the entire ATP moiety with the alpha-phosphate in an orientation that is productive for accepting an incoming target hydroxyl side chain. Its function is as follows. Adenylyltransferase that mediates the addition of adenosine 5'-monophosphate (AMP) to specific residues of target proteins. This Danio rerio (Zebrafish) protein is Protein adenylyltransferase FICD (ficd).